A 116-amino-acid polypeptide reads, in one-letter code: Ribonuclease P protein component (116 aa).

Belongs to the RnpA family. As to quaternary structure, consists of a catalytic RNA component (M1 or rnpB) and a protein subunit.

It catalyses the reaction Endonucleolytic cleavage of RNA, removing 5'-extranucleotides from tRNA precursor.. In terms of biological role, RNaseP catalyzes the removal of the 5'-leader sequence from pre-tRNA to produce the mature 5'-terminus. It can also cleave other RNA substrates such as 4.5S RNA. The protein component plays an auxiliary but essential role in vivo by binding to the 5'-leader sequence and broadening the substrate specificity of the ribozyme. This chain is Ribonuclease P protein component, found in Thermoanaerobacter pseudethanolicus (strain ATCC 33223 / 39E) (Clostridium thermohydrosulfuricum).